The chain runs to 576 residues: Proline--tRNA ligase (576 aa).

This sequence belongs to the class-II aminoacyl-tRNA synthetase family. ProS type 1 subfamily. In terms of assembly, homodimer.

Its subcellular location is the cytoplasm. The catalysed reaction is tRNA(Pro) + L-proline + ATP = L-prolyl-tRNA(Pro) + AMP + diphosphate. Its function is as follows. Catalyzes the attachment of proline to tRNA(Pro) in a two-step reaction: proline is first activated by ATP to form Pro-AMP and then transferred to the acceptor end of tRNA(Pro). As ProRS can inadvertently accommodate and process non-cognate amino acids such as alanine and cysteine, to avoid such errors it has two additional distinct editing activities against alanine. One activity is designated as 'pretransfer' editing and involves the tRNA(Pro)-independent hydrolysis of activated Ala-AMP. The other activity is designated 'posttransfer' editing and involves deacylation of mischarged Ala-tRNA(Pro). The misacylated Cys-tRNA(Pro) is not edited by ProRS. The chain is Proline--tRNA ligase from Thiobacillus denitrificans (strain ATCC 25259 / T1).